The following is a 176-amino-acid chain: MATILIHNEENTLLESEQEVAAYLENQGVIYEHWDIAKLPNRLSEKYDLTDEEKDEILTVFQKEIESISEKRGYKSQDVISLSDATPNLDDLLQNFQREHHHTDDEVRFIVSGHGIFAIQGKDGVFFDVRLNPGDLISVPPHIRHYFTLQEDRKVVSVRIFVTTEGWVPIYEEETV.

Positions 100, 102, 106, and 145 each coordinate Fe(2+). Positions 100, 102, 106, and 145 each coordinate Ni(2+).

The protein belongs to the acireductone dioxygenase (ARD) family. In terms of assembly, monomer. Fe(2+) serves as cofactor. Ni(2+) is required as a cofactor.

It catalyses the reaction 1,2-dihydroxy-5-(methylsulfanyl)pent-1-en-3-one + O2 = 3-(methylsulfanyl)propanoate + CO + formate + 2 H(+). The catalysed reaction is 1,2-dihydroxy-5-(methylsulfanyl)pent-1-en-3-one + O2 = 4-methylsulfanyl-2-oxobutanoate + formate + 2 H(+). The protein operates within amino-acid biosynthesis; L-methionine biosynthesis via salvage pathway; L-methionine from S-methyl-5-thio-alpha-D-ribose 1-phosphate: step 5/6. Functionally, catalyzes 2 different reactions between oxygen and the acireductone 1,2-dihydroxy-3-keto-5-methylthiopentene (DHK-MTPene) depending upon the metal bound in the active site. Fe-containing acireductone dioxygenase (Fe-ARD) produces formate and 2-keto-4-methylthiobutyrate (KMTB), the alpha-ketoacid precursor of methionine in the methionine recycle pathway. Ni-containing acireductone dioxygenase (Ni-ARD) produces methylthiopropionate, carbon monoxide and formate, and does not lie on the methionine recycle pathway. In Bacillus pumilus (strain SAFR-032), this protein is Acireductone dioxygenase.